Consider the following 398-residue polypeptide: Deoxyguanosinetriphosphate triphosphohydrolase-like protein (398 aa).

An HD domain is found at 68–215 (RLTHTLEVAQ…AAISDDIAYD (148 aa)).

Belongs to the dGTPase family. Type 2 subfamily.

This is Deoxyguanosinetriphosphate triphosphohydrolase-like protein from Azorhizobium caulinodans (strain ATCC 43989 / DSM 5975 / JCM 20966 / LMG 6465 / NBRC 14845 / NCIMB 13405 / ORS 571).